Consider the following 141-residue polypeptide: Large ribosomal subunit protein uL16 (141 aa).

Positions 1 to 20 (MLMPKRTKYRKQQKGRNRGK) are disordered.

Belongs to the universal ribosomal protein uL16 family. As to quaternary structure, part of the 50S ribosomal subunit.

Binds 23S rRNA and is also seen to make contacts with the A and possibly P site tRNAs. This Nautilia profundicola (strain ATCC BAA-1463 / DSM 18972 / AmH) protein is Large ribosomal subunit protein uL16.